Here is a 213-residue protein sequence, read N- to C-terminus: Peroxynitrite isomerase (213 aa).

Residues 1 to 10 are compositionally biased toward low complexity; it reads MGADATGDTA. The tract at residues 1–26 is disordered; it reads MGADATGDTAARGDRAAHGDTASGGA. Positions 51-57 match the GXWXGXG motif; the sequence is GTWRGEG. His203 is a heme b binding site.

Belongs to the nitrobindin family. As to quaternary structure, homodimer. Heme b serves as cofactor.

It catalyses the reaction peroxynitrite = nitrate. Its pathway is nitrogen metabolism. Functionally, heme-binding protein able to scavenge peroxynitrite and to protect free L-tyrosine against peroxynitrite-mediated nitration, by acting as a peroxynitrite isomerase that converts peroxynitrite to nitrate. Therefore, this protein likely plays a role in peroxynitrite sensing and in the detoxification of reactive nitrogen and oxygen species (RNS and ROS, respectively). Is able to bind nitric oxide (NO) in vitro, but may act as a sensor of peroxynitrite levels in vivo. The protein is Peroxynitrite isomerase of Parafrankia sp. (strain EAN1pec).